A 400-amino-acid polypeptide reads, in one-letter code: Nicotinate phosphoribosyltransferase (400 aa).

H220 carries the phosphohistidine; by autocatalysis modification.

This sequence belongs to the NAPRTase family. In terms of processing, transiently phosphorylated on a His residue during the reaction cycle. Phosphorylation strongly increases the affinity for substrates and increases the rate of nicotinate D-ribonucleotide production. Dephosphorylation regenerates the low-affinity form of the enzyme, leading to product release.

It carries out the reaction nicotinate + 5-phospho-alpha-D-ribose 1-diphosphate + ATP + H2O = nicotinate beta-D-ribonucleotide + ADP + phosphate + diphosphate. It participates in cofactor biosynthesis; NAD(+) biosynthesis; nicotinate D-ribonucleotide from nicotinate: step 1/1. In terms of biological role, catalyzes the synthesis of beta-nicotinate D-ribonucleotide from nicotinate and 5-phospho-D-ribose 1-phosphate at the expense of ATP. In Escherichia coli O127:H6 (strain E2348/69 / EPEC), this protein is Nicotinate phosphoribosyltransferase.